The primary structure comprises 313 residues: Homoserine O-acetyltransferase (313 aa).

Cys-142 serves as the catalytic Acyl-thioester intermediate. Substrate-binding residues include Lys-163 and Ser-191. The active-site Proton acceptor is the His-234. The active site involves Glu-236. Arg-248 is a substrate binding site.

It belongs to the MetA family.

It is found in the cytoplasm. It carries out the reaction L-homoserine + acetyl-CoA = O-acetyl-L-homoserine + CoA. It functions in the pathway amino-acid biosynthesis; L-methionine biosynthesis via de novo pathway; O-acetyl-L-homoserine from L-homoserine: step 1/1. Transfers an acetyl group from acetyl-CoA to L-homoserine, forming acetyl-L-homoserine. The sequence is that of Homoserine O-acetyltransferase from Streptococcus sanguinis (strain SK36).